Here is a 385-residue protein sequence, read N- to C-terminus: 1-deoxy-D-xylulose 5-phosphate reductoisomerase (385 aa).

Residues threonine 10, glycine 11, isoleucine 13, glycine 36, and asparagine 38 each coordinate NADPH. Residue lysine 123 participates in 1-deoxy-D-xylulose 5-phosphate binding. Residue glutamate 124 coordinates NADPH. Aspartate 148 is a Mn(2+) binding site. 4 residues coordinate 1-deoxy-D-xylulose 5-phosphate: serine 149, glutamate 150, serine 172, and histidine 195. Glutamate 150 lines the Mn(2+) pocket. Glycine 201 provides a ligand contact to NADPH. 1-deoxy-D-xylulose 5-phosphate contacts are provided by serine 208, asparagine 213, lysine 214, and glutamate 217. Position 217 (glutamate 217) interacts with Mn(2+).

Belongs to the DXR family. Mg(2+) is required as a cofactor. Requires Mn(2+) as cofactor.

The enzyme catalyses 2-C-methyl-D-erythritol 4-phosphate + NADP(+) = 1-deoxy-D-xylulose 5-phosphate + NADPH + H(+). It participates in isoprenoid biosynthesis; isopentenyl diphosphate biosynthesis via DXP pathway; isopentenyl diphosphate from 1-deoxy-D-xylulose 5-phosphate: step 1/6. Its function is as follows. Catalyzes the NADPH-dependent rearrangement and reduction of 1-deoxy-D-xylulose-5-phosphate (DXP) to 2-C-methyl-D-erythritol 4-phosphate (MEP). This Anaplasma phagocytophilum (strain HZ) protein is 1-deoxy-D-xylulose 5-phosphate reductoisomerase.